We begin with the raw amino-acid sequence, 244 residues long: Large ribosomal subunit protein bL25 (244 aa).

A disordered region spans residues 197–244; the sequence is ADVEAEAAEAALAKEAATEAAEEEETEKPASEAEASGEAEQADTDKKE. Low complexity predominate over residues 204 to 215; the sequence is AEAALAKEAATE.

This sequence belongs to the bacterial ribosomal protein bL25 family. CTC subfamily. In terms of assembly, part of the 50S ribosomal subunit; part of the 5S rRNA/L5/L18/L25 subcomplex. Contacts the 5S rRNA. Binds to the 5S rRNA independently of L5 and L18.

Its function is as follows. This is one of the proteins that binds to the 5S RNA in the ribosome where it forms part of the central protuberance. The polypeptide is Large ribosomal subunit protein bL25 (Coxiella burnetii (strain CbuK_Q154) (Coxiella burnetii (strain Q154))).